A 188-amino-acid chain; its full sequence is GTP cyclohydrolase 1 (188 aa).

Zn(2+) contacts are provided by Cys78, His81, and Cys150.

The protein belongs to the GTP cyclohydrolase I family. Toroid-shaped homodecamer, composed of two pentamers of five dimers.

The catalysed reaction is GTP + H2O = 7,8-dihydroneopterin 3'-triphosphate + formate + H(+). It functions in the pathway cofactor biosynthesis; 7,8-dihydroneopterin triphosphate biosynthesis; 7,8-dihydroneopterin triphosphate from GTP: step 1/1. This chain is GTP cyclohydrolase 1, found in Halalkalibacterium halodurans (strain ATCC BAA-125 / DSM 18197 / FERM 7344 / JCM 9153 / C-125) (Bacillus halodurans).